The primary structure comprises 419 residues: Tyrosine--tRNA ligase (419 aa).

Position 34 (Tyr-34) interacts with L-tyrosine. The 'HIGH' region motif lies at 39–48; it reads PSGDSMHIGH. L-tyrosine is bound by residues Tyr-168 and Gln-172. The short motif at 230–234 is the 'KMSKS' region element; that stretch reads KFGKS. Residue Lys-233 participates in ATP binding. One can recognise an S4 RNA-binding domain in the interval 352 to 418; it reads ANLVDWLVTL…GKKKYFLVSY (67 aa).

Belongs to the class-I aminoacyl-tRNA synthetase family. TyrS type 1 subfamily. In terms of assembly, homodimer.

The protein resides in the cytoplasm. It catalyses the reaction tRNA(Tyr) + L-tyrosine + ATP = L-tyrosyl-tRNA(Tyr) + AMP + diphosphate + H(+). Its function is as follows. Catalyzes the attachment of tyrosine to tRNA(Tyr) in a two-step reaction: tyrosine is first activated by ATP to form Tyr-AMP and then transferred to the acceptor end of tRNA(Tyr). This Listeria monocytogenes serotype 4a (strain HCC23) protein is Tyrosine--tRNA ligase.